We begin with the raw amino-acid sequence, 338 residues long: Lipoate-protein ligase A (338 aa).

The 188-residue stretch at 29 to 216 folds into the BPL/LPL catalytic domain; the sequence is PATQRVLFLW…AFFEHYSERV (188 aa). ATP-binding positions include Arg-71, 76–79, and Lys-134; that span reads GAVF. Residue Lys-134 participates in (R)-lipoate binding.

It belongs to the LplA family. In terms of assembly, monomer.

Its subcellular location is the cytoplasm. The catalysed reaction is L-lysyl-[lipoyl-carrier protein] + (R)-lipoate + ATP = N(6)-[(R)-lipoyl]-L-lysyl-[lipoyl-carrier protein] + AMP + diphosphate + H(+). Its pathway is protein modification; protein lipoylation via exogenous pathway; protein N(6)-(lipoyl)lysine from lipoate: step 1/2. It participates in protein modification; protein lipoylation via exogenous pathway; protein N(6)-(lipoyl)lysine from lipoate: step 2/2. Its function is as follows. Catalyzes both the ATP-dependent activation of exogenously supplied lipoate to lipoyl-AMP and the transfer of the activated lipoyl onto the lipoyl domains of lipoate-dependent enzymes. The chain is Lipoate-protein ligase A from Enterobacter sp. (strain 638).